A 342-amino-acid chain; its full sequence is uncharacterized protein (342 aa).

An N-terminal signal peptide occupies residues 1 to 18; it reads MWKKLMLLLLMAIPLVSA.

This is an uncharacterized protein from Methanocaldococcus jannaschii (strain ATCC 43067 / DSM 2661 / JAL-1 / JCM 10045 / NBRC 100440) (Methanococcus jannaschii).